The sequence spans 953 residues: Translation initiation factor IF-2 (953 aa).

Disordered regions lie at residues 48-240 (SSFS…AQQE) and 279-363 (TKLK…TERK). Composition is skewed to basic and acidic residues over residues 80-89 (TGSEHVEKTQ), 98-111 (FKAE…EQAA), and 140-188 (QGDK…ENHK). A compositionally biased stretch (polar residues) spans 191–207 (RFTNQKKQGRQEPQSKS). Residues 229 to 240 (RQSETRFRAQQE) are compositionally biased toward basic and acidic residues. The span at 282 to 291 (KSSNISAKST) shows a compositional bias: polar residues. Basic and acidic residues predominate over residues 300 to 317 (ARPEKNRELTHHSQEGQK). The span at 322–338 (SWNSQNQVRNQKNSNWN) shows a compositional bias: low complexity. Basic residues predominate over residues 339-348 (KNKKTKKGKN). One can recognise a tr-type G domain in the interval 454–623 (ERAPVVTIMG…LLVAEVEELK (170 aa)). Positions 463-470 (GHVDHGKT) are G1. A GTP-binding site is contributed by 463 to 470 (GHVDHGKT). The tract at residues 488–492 (GITQH) is G2. The interval 509 to 512 (DTPG) is G3. GTP contacts are provided by residues 509-513 (DTPGH) and 563-566 (NKID). A G4 region spans residues 563-566 (NKID). A G5 region spans residues 599–601 (SAK).

Belongs to the TRAFAC class translation factor GTPase superfamily. Classic translation factor GTPase family. IF-2 subfamily.

It is found in the cytoplasm. Its function is as follows. One of the essential components for the initiation of protein synthesis. Protects formylmethionyl-tRNA from spontaneous hydrolysis and promotes its binding to the 30S ribosomal subunits. Also involved in the hydrolysis of GTP during the formation of the 70S ribosomal complex. This chain is Translation initiation factor IF-2, found in Streptococcus pyogenes serotype M1.